The following is a 58-amino-acid chain: Microcin J25 (58 aa).

A propeptide spanning residues 1 to 37 (MIKHFHFNKLSSGKKNNVPSPAKGVIQIKKSASQLTK) is cleaved from the precursor. The isoglutamyl glycine isopeptide (Gly-Glu) cross-link spans 38 to 45 (GGAGHVPE).

Its subcellular location is the secreted. Peptide antibiotic that functions through inhibition of the bacterial DNA-dependent RNA polymerase (RNAP). Inhibits transcription by binding deep within RNAP secondary channel, where it sterically blocks the folding of the trigger loop, which is essential for efficient catalysis. In addition, it also seems to restrict access of nucleotide substrates to the catalytic center, and shows a partially competitive mode of inhibition with them. Exhibits potent bacteriocidal activity against a range of Enterobacteriaceae, including several pathogenic E.coli, Salmonella and Shigella strains. Also acts on the cytoplasmic membrane of Salmonella newport, producing alteration of membrane permeability and disruption of the subsequent gradient dissipation, which inhibits several processes essential for cell viability, such as oxygen consumption. Induces bacterial filamentation in susceptible cells in a non-SOS-dependent way, but this phenotype may result from impaired transcription of genes coding for cell division proteins. The polypeptide is Microcin J25 (mcjA) (Escherichia coli).